A 115-amino-acid chain; its full sequence is Double-headed protease inhibitor, submandibular gland (115 aa).

2 consecutive Kazal-like domains span residues 6-66 (IGRE…ACDI) and 67-115 (ECTE…HGEC). Disulfide bonds link cysteine 12–cysteine 46, cysteine 24–cysteine 43, cysteine 32–cysteine 64, cysteine 68–cysteine 97, cysteine 75–cysteine 94, and cysteine 83–cysteine 115.

It is found in the secreted. Functionally, this inhibitor is composed of two homologous actively inhibiting halves: one which inhibits trypsin, the other which inhibits elastase. The chain is Double-headed protease inhibitor, submandibular gland from Vulpes vulpes (Red fox).